A 169-amino-acid polypeptide reads, in one-letter code: Photosystem I assembly protein Ycf3 (169 aa).

3 TPR repeats span residues 35–68, 72–105, and 120–153; these read AFTY…EIDP, SYIL…NPSL, and GEQA…APNN.

Belongs to the Ycf3 family.

It localises to the plastid. Its subcellular location is the chloroplast thylakoid membrane. Essential for the assembly of the photosystem I (PSI) complex. May act as a chaperone-like factor to guide the assembly of the PSI subunits. This chain is Photosystem I assembly protein Ycf3, found in Staurastrum punctulatum (Green alga).